A 313-amino-acid polypeptide reads, in one-letter code: NAD-capped RNA hydrolase NudC (313 aa).

Residue R111 coordinates substrate. The region spanning 168–293 (PRIDPAVICL…DWSSASESKL (126 aa)) is the Nudix hydrolase domain. Residues A202, E218, and E222 each coordinate a divalent metal cation. The short motif at 203–224 (GFVEAGESFEVCVAREIREEIG) is the Nudix box element. 236 to 243 (QPWPFPRS) lines the substrate pocket. A divalent metal cation is bound at residue E264.

It belongs to the Nudix hydrolase family. NudC subfamily. Homodimer. It depends on Mg(2+) as a cofactor. Requires Mn(2+) as cofactor.

It carries out the reaction a 5'-end NAD(+)-phospho-ribonucleoside in mRNA + H2O = a 5'-end phospho-adenosine-phospho-ribonucleoside in mRNA + beta-nicotinamide D-ribonucleotide + 2 H(+). The catalysed reaction is NAD(+) + H2O = beta-nicotinamide D-ribonucleotide + AMP + 2 H(+). The enzyme catalyses NADH + H2O = reduced beta-nicotinamide D-ribonucleotide + AMP + 2 H(+). Its function is as follows. mRNA decapping enzyme that specifically removes the nicotinamide adenine dinucleotide (NAD) cap from a subset of mRNAs by hydrolyzing the diphosphate linkage to produce nicotinamide mononucleotide (NMN) and 5' monophosphate mRNA. The NAD-cap is present at the 5'-end of some mRNAs and stabilizes RNA against 5'-processing. Has preference for mRNAs with a 5'-end purine. Catalyzes the hydrolysis of a broad range of dinucleotide pyrophosphates. This is NAD-capped RNA hydrolase NudC from Mycobacterium bovis (strain ATCC BAA-935 / AF2122/97).